The sequence spans 367 residues: Phthiodiolone/phenolphthiodiolone dimycocerosates ketoreductase (367 aa).

It belongs to the mer family. Phthiodiolone/phenolphthiodiolone dimycocerosates ketoreductase subfamily.

In terms of biological role, catalyzes the reduction of the keto moiety of phthiodiolone dimycocerosates (DIM B) and glycosylated phenolphthiodiolone dimycocerosates to form the intermediate compounds phthiotriol and glycosylated phenolphthiotriol dimycocerosates during phthiocerol dimycocerosates (DIM A) and glycosylated phenolphthiocerol dimycocerosates (PGL) biosynthesis. The sequence is that of Phthiodiolone/phenolphthiodiolone dimycocerosates ketoreductase from Mycobacterium kansasii.